The sequence spans 238 residues: Ribitol-5-phosphate cytidylyltransferase (238 aa).

CTP-binding positions include 7–10 (LAGG) and 81–87 (GSDRNET).

It belongs to the IspD/TarI cytidylyltransferase family. TarI subfamily.

The catalysed reaction is D-ribitol 5-phosphate + CTP + H(+) = CDP-L-ribitol + diphosphate. The protein operates within cell wall biogenesis; poly(ribitol phosphate) teichoic acid biosynthesis. Its function is as follows. Catalyzes the transfer of the cytidylyl group of CTP to D-ribitol 5-phosphate. The polypeptide is Ribitol-5-phosphate cytidylyltransferase (Staphylococcus saprophyticus subsp. saprophyticus (strain ATCC 15305 / DSM 20229 / NCIMB 8711 / NCTC 7292 / S-41)).